Here is a 1262-residue protein sequence, read N- to C-terminus: Protein stoned-B (1262 aa).

4 short sequence motifs (NPF) span residues 3–5 (NPF), 19–21 (NPF), 33–35 (NPF), and 43–45 (NPF). Residues 17–36 (AANPFLMQSEPEPSSDNPFM) form a disordered region. The tract at residues 49 to 189 (ADDLELGAEP…DVSVDSGSSA (141 aa)) is disordered. The segment covering 50–60 (DDLELGAEPEA) has biased composition (acidic residues). A compositionally biased stretch (low complexity) spans 101–111 (PPQSQPQLQSH). Residues 115–124 (HPPPPRPLVP) show a composition bias toward pro residues. Residues 128 to 145 (TQDLISTVSSQLDETSSE) show a composition bias toward polar residues. The span at 172-189 (DSGLADLLDVSVDSGSSA) shows a compositional bias: low complexity. The NPF 5 motif lies at 210-212 (NPF). Disordered regions lie at residues 225-452 (VPLP…SPPT) and 474-507 (EEMD…NFAP). Residues 233–272 (KQPPRPPPPRPAPPRPAPPGQAAPQRPPPPLAAVNPPPAA) are compositionally biased toward pro residues. A compositionally biased stretch (acidic residues) spans 325–345 (DLDETIGEGEPPEQEEPDTEQ). Over residues 384–401 (QVNNMAAPSGTASTQRAT) the composition is skewed to polar residues. The span at 417–429 (DDEDEPEAMQEPE) shows a compositional bias: acidic residues. The NPF 6 signature appears at 493–495 (NPF). Phosphoserine occurs at positions 623 and 626. The segment at 643 to 709 (SGVAPQLAPP…QDTPQTPLYD (67 aa)) is disordered. Residues 673-675 (NPF) carry the NPF 7 motif. The SHD domain occupies 728–902 (GWEMQLRQPN…KIPALRERAL (175 aa)). Positions 847–1108 (KEFGSDLKKL…KGIERILGAV (262 aa)) are interaction with Syt. The MHD domain occupies 906–1219 (MEEVQVTAVD…ARHEYKVGIE (314 aa)). The segment at 1226-1262 (TNAYLAATRPIREEPPTTATKPTASPVAPSDSDTDSN) is disordered. A compositionally biased stretch (low complexity) spans 1241–1254 (PTTATKPTASPVAP).

It belongs to the Stoned B family. Interacts with the second C2 domain of Syt.

It localises to the cytoplasm. Its subcellular location is the synapse. Functionally, adapter protein involved in endocytic recycling of synaptic vesicles membranes. May act by mediating the retrieval of synaptotagmin protein Syt from the plasma membrane, thereby facilitating the internalization of multiple synaptic vesicles from the plasma membrane. This Drosophila melanogaster (Fruit fly) protein is Protein stoned-B (stnB).